A 222-amino-acid chain; its full sequence is RNA chaperone ProQ (222 aa).

Positions 94 to 113 (EHADHAKQQLDESKAKAAEK) are enriched in basic and acidic residues. The interval 94–171 (EHADHAKQQL…PAKLTDSDLQ (78 aa)) is disordered. The span at 114–131 (RKAKLAQQPKRKDKRQFN) shows a compositional bias: basic residues. Residues 133-148 (PKGEKSANSDHADTKR) are compositionally biased toward basic and acidic residues. Over residues 155 to 164 (NRPNTTPPAK) the composition is skewed to low complexity.

Belongs to the ProQ family.

It localises to the cytoplasm. Its function is as follows. RNA chaperone with significant RNA binding, RNA strand exchange and RNA duplexing activities. The protein is RNA chaperone ProQ of Alteromonas mediterranea (strain DSM 17117 / CIP 110805 / LMG 28347 / Deep ecotype).